Reading from the N-terminus, the 268-residue chain is Eukaryotic translation initiation factor 3 subunit J (268 aa).

Disordered stretches follow at residues M1–H117 and N219–V242. The span at D26–V44 shows a compositional bias: acidic residues. Positions E40–E95 form a coiled coil. Basic and acidic residues-rich tracts occupy residues E45–A65 and Q72–E86. The segment covering A87–E99 has biased composition (acidic residues). Basic and acidic residues-rich tracts occupy residues A100–H117 and E220–S232.

The protein belongs to the eIF-3 subunit J family. In terms of assembly, component of the eukaryotic translation initiation factor 3 (eIF-3) complex.

It is found in the cytoplasm. Component of the eukaryotic translation initiation factor 3 (eIF-3) complex, which is involved in protein synthesis of a specialized repertoire of mRNAs and, together with other initiation factors, stimulates binding of mRNA and methionyl-tRNAi to the 40S ribosome. The eIF-3 complex specifically targets and initiates translation of a subset of mRNAs involved in cell proliferation. This Aspergillus clavatus (strain ATCC 1007 / CBS 513.65 / DSM 816 / NCTC 3887 / NRRL 1 / QM 1276 / 107) protein is Eukaryotic translation initiation factor 3 subunit J (hcr1).